Consider the following 191-residue polypeptide: Holliday junction branch migration complex subunit RuvA (191 aa).

Residues 1 to 64 (MIGRLTGTLA…EDAQLLYGFL (64 aa)) form a domain I region. Positions 65–138 (TATERATFRQ…KGKLGPDLAL (74 aa)) are domain II. Residues 138-142 (LPGAV) form a flexible linker region. A domain III region spans residues 143–191 (IRNEAQSDIVQALIALGYNEREAAAAIKPLPADVGVSDGIKLALRALGK).

The protein belongs to the RuvA family. Homotetramer. Forms an RuvA(8)-RuvB(12)-Holliday junction (HJ) complex. HJ DNA is sandwiched between 2 RuvA tetramers; dsDNA enters through RuvA and exits via RuvB. An RuvB hexamer assembles on each DNA strand where it exits the tetramer. Each RuvB hexamer is contacted by two RuvA subunits (via domain III) on 2 adjacent RuvB subunits; this complex drives branch migration. In the full resolvosome a probable DNA-RuvA(4)-RuvB(12)-RuvC(2) complex forms which resolves the HJ.

It localises to the cytoplasm. Functionally, the RuvA-RuvB-RuvC complex processes Holliday junction (HJ) DNA during genetic recombination and DNA repair, while the RuvA-RuvB complex plays an important role in the rescue of blocked DNA replication forks via replication fork reversal (RFR). RuvA specifically binds to HJ cruciform DNA, conferring on it an open structure. The RuvB hexamer acts as an ATP-dependent pump, pulling dsDNA into and through the RuvAB complex. HJ branch migration allows RuvC to scan DNA until it finds its consensus sequence, where it cleaves and resolves the cruciform DNA. This chain is Holliday junction branch migration complex subunit RuvA, found in Leptothrix cholodnii (strain ATCC 51168 / LMG 8142 / SP-6) (Leptothrix discophora (strain SP-6)).